A 523-amino-acid polypeptide reads, in one-letter code: MNTRNPDKVVIVGGGTAGWMTASYLKKAFGERVSVTLVESGTIGTVGVGEATFSDIRHFFEFLDLREEEWMPACNATYKLAVRFQDWQRPGHHFYHPFEQMRSVDGFPLTDWWLQNGPTDRFDRDCFVMASLCDAGRSPRYLNGSLLQQEFDERAEEPAGLTMSEHQGKTQFPYAYHFEAALLAEFLSGYSKDRGVKHVVDEVLEVKLDDRGWISHVVTKEHGDIGGDLFVDCTGFRGVLLNQALGVPFVSYQDTLPNDSAVALQVPLDMEARGIPPYTRATAKEAGWIWTIPLIGRIGTGYVYAKDYCSPEEAERTLREFVGPEAADVEANHIRMRIGRSEQSWKNNCVAIGLSSGFVEPLESTGIFFIHHAIEQLVKHFPAGDWHPQLRAGYNSAVANVMDGVREFLVLHYLGAARNDTRYWKDTKTRAVPDALAERIERWKVQLPDSENVFPYYHGLPPYSYMAILLGTGAIGLRPSPALALADPAAAEKEFTAIRDRARFLVDTLPSQYEYFAAMGQRV.

6 residues coordinate FAD: G14, S40, I43, V46, V48, and A51. K79 is an active-site residue. P97 contacts L-tryptophan. FAD-binding residues include V203 and L354. Chloride contacts are provided by T365 and G366. Position 367 (I367) interacts with FAD. Residues Y456 and Y457 each contribute to the L-tryptophan site.

The protein belongs to the flavin-dependent halogenase family. Bacterial tryptophan halogenase subfamily. As to quaternary structure, homodimer.

It carries out the reaction L-tryptophan + FADH2 + chloride + O2 = 6-chloro-L-tryptophan + FAD + 2 H2O. The enzyme catalyses D-tryptophan + FADH2 + chloride + O2 = 6-chloro-D-tryptophan + FAD + 2 H2O. Functionally, catalyzes the chlorination of tryptophan (Trp) at C6 position to yield 6-chloro-tryptophan. Accepts both L and D-Trp as the substrates. The enzyme also uses bromide to yield 6-bromo-Trp. In vitro, can also catalyze the halogenation of 3-indolepropionic acid, N-methyltryptophan and non-indolic aromatic substrates such as kynurenine, anthranilamide and N-phenylanthranilic acid. In Streptomyces toxytricini (Actinomyces toxytricini), this protein is Tryptophan 6-halogenase SttH.